The chain runs to 159 residues: Transcription antitermination protein NusB (159 aa).

This sequence belongs to the NusB family.

Its function is as follows. Involved in transcription antitermination. Required for transcription of ribosomal RNA (rRNA) genes. Binds specifically to the boxA antiterminator sequence of the ribosomal RNA (rrn) operons. In Xanthomonas axonopodis pv. citri (strain 306), this protein is Transcription antitermination protein NusB.